Here is a 296-residue protein sequence, read N- to C-terminus: Sulfotransferase 1B1 (296 aa).

48 to 53 (KSGTTW) provides a ligand contact to 3'-phosphoadenylyl sulfate. A substrate-binding site is contributed by 107-109 (KTH). Residue histidine 109 is the Proton acceptor of the active site. 3'-phosphoadenylyl sulfate is bound by residues arginine 131, serine 139, tyrosine 194, 228-233 (TSFEMM), and 258-260 (RKG).

The protein belongs to the sulfotransferase 1 family. In terms of tissue distribution, expressed highly in the colon, kidney and small intestine of male and female dogs. Highly expressed in the jejunum and ileum of the male dog than the female dog, which displayed more expression in duodenum (at protein level).

It is found in the cytoplasm. It carries out the reaction a phenol + 3'-phosphoadenylyl sulfate = an aryl sulfate + adenosine 3',5'-bisphosphate + H(+). The enzyme catalyses 3,3',5-triiodo-L-thyronine + 3'-phosphoadenylyl sulfate = 3,3',5-triiodo-L-thyronine sulfate + adenosine 3',5'-bisphosphate + H(+). It catalyses the reaction 3,3',5'-triiodo-L-thyronine + 3'-phosphoadenylyl sulfate = 3,3',5'-triiodo-L-thyronine sulfate + adenosine 3',5'-bisphosphate + H(+). The catalysed reaction is 3,3'-diiodo-L-thyronine + 3'-phosphoadenylyl sulfate = 3,3'-diiodo-L-thyronine sulfate + adenosine 3',5'-bisphosphate + H(+). It carries out the reaction 4-ethylphenol + 3'-phosphoadenylyl sulfate = 4-ethylphenyl sulfate + adenosine 3',5'-bisphosphate + H(+). In terms of biological role, sulfotransferase that utilizes 3'-phospho-5'-adenylyl sulfate (PAPS) as sulfonate donor to catalyze the sulfate conjugation of dopamine, small phenols such as 1-naphthol and p-nitrophenol and thyroid hormones, including 3,3'-diiodothyronine, triidothyronine (T3) and reverse triiodothyronine (rT3). May play a role in gut microbiota-host metabolic interaction. O-sulfonates 4-ethylphenol (4-EP), a dietary tyrosine-derived metabolite produced by gut bacteria. The product 4-EPS crosses the blood-brain barrier and may negatively regulate oligodendrocyte maturation and myelination, affecting the functional connectivity of different brain regions associated with the limbic system. This is Sulfotransferase 1B1 (SULT1B1) from Canis lupus familiaris (Dog).